Reading from the N-terminus, the 328-residue chain is Ferredoxin--NADP reductase 1 (328 aa).

The FAD site is built by glutamate 37, lysine 45, tyrosine 49, valine 89, and threonine 310.

Belongs to the ferredoxin--NADP reductase type 2 family. Homodimer. FAD is required as a cofactor.

The catalysed reaction is 2 reduced [2Fe-2S]-[ferredoxin] + NADP(+) + H(+) = 2 oxidized [2Fe-2S]-[ferredoxin] + NADPH. The sequence is that of Ferredoxin--NADP reductase 1 from Latilactobacillus sakei subsp. sakei (strain 23K) (Lactobacillus sakei subsp. sakei).